We begin with the raw amino-acid sequence, 388 residues long: Staphopain A (388 aa).

The first 25 residues, Met-1–Ala-25, serve as a signal peptide directing secretion. The propeptide occupies Glu-26–Thr-214. Active-site residues include Cys-238, His-334, and Asn-355.

This sequence belongs to the peptidase C47 family. In the cytoplasm, prematurely activated/folded ScpA forms a stable non-covalent complex with ScpB. Cleavage leads to the activation of ScpA probably by an auto-catalytic manner.

It localises to the secreted. The enzyme catalyses Broad endopeptidase action on proteins including elastin, but rather limited hydrolysis of small-molecule substrates. Assays are conveniently made with hemoglobin, casein or Z-Phe-Arg-NHMec as substrate.. With respect to regulation, prematurely activated/folded staphopain A is inhibited by staphostatin A (ScpB), which is probably required to protect staphylococcal cytoplasmic proteins from degradation by ScpA. In terms of biological role, cysteine protease that plays an important role in the inhibition of host innate immune response. Cleaves host elastins found in connective tissues, pulmonary surfactant protein A in the lungs, and the chemokine receptor CXCR2 on leukocytes. Proteolytic cleavage of surfactant protein A impairs bacterial phagocytosis by neutrophils while CXCR2 degradation blocks neutrophil activation and chemotaxis. Additionally, promotes vascular leakage by activating the plasma kallikerin/kinin system, resulting in hypotension. The chain is Staphopain A (sspP) from Staphylococcus aureus (strain MSSA476).